An 825-amino-acid polypeptide reads, in one-letter code: Outer dense fiber protein 2 (825 aa).

Phosphoserine is present on residues V22, K37, S68, and S69. A disordered region spans residues 27–46 (LPKPSAASSQKSHKRGMKGD). A Phosphothreonine modification is found at T87. At S90 the chain carries Phosphoserine; by TSSK4. Phosphoserine occurs at positions 101 and 104. T105 carries the post-translational modification Phosphothreonine. A phosphoserine mark is found at S110 and S124. K133 is covalently cross-linked (Glycyl lysine isopeptide (Lys-Gly) (interchain with G-Cter in SUMO2)). Residue S134 is modified to Phosphoserine. Residues 139–212 (QKGERQMAKR…MSKLVEAEMD (74 aa)) are a coiled coil. A Phosphothreonine modification is found at T226. 2 coiled-coil regions span residues 240–418 (DINT…AEQL) and 456–793 (EIIV…NYVQ). 2 positions are modified to phosphoserine: S256 and S627. The segment at 532–696 (KNYEGMIDNY…EAIHQAQLRL (165 aa)) is interaction with BBOF1.

This sequence belongs to the ODF2 family. Self-associates. Associates with microtubules and forms a fibrillar structure partially linked to the microtubule network. Interacts through its C-terminus with PLK1. Interacts with ODF1. Interacts with MARK4; the interaction is required for localization of ODF2 to centrioles. Interacts with TSSK4. Interacts with AKNA. Interacts with QRICH2. Interacts with CFAP58. Interacts with BBOF1. Interacts with CCDC38. Interacts with CCDC42. Post-translationally, tyrosine phosphorylated. Phosphorylated on Ser-90 by TSSK4. Testis-specific. Expressed in the proximal compartment of the elongated spermatid tail; later expression progresses to the distal spermatid tail compartment located in the lumen of the seminiferous epithelium. In spermatids (stages II-III) expression of the tails peaks and remains strong during the remaining steps of spermiogenesis (at protein level). Expression correlates with the onset of spermatogenesis and is first detected at 30 days. Higher expression is seen in testis of 40-day-old and adults that are older than 50 days. No expression is seen in 10- and 20-day-old testes.

It localises to the cytoplasm. It is found in the cytoskeleton. Its subcellular location is the microtubule organizing center. The protein localises to the centrosome. The protein resides in the cell projection. It localises to the cilium. It is found in the centriole. Its subcellular location is the spindle pole. The protein localises to the flagellum. Seems to be a major component of sperm tail outer dense fibers (ODF). ODFs are filamentous structures located on the outside of the axoneme in the midpiece and principal piece of the mammalian sperm tail and may help to maintain the passive elastic structures and elastic recoil of the sperm tail. May have a modulating influence on sperm motility. Functions as a general scaffold protein that is specifically localized at the distal/subdistal appendages of mother centrioles. Component of the centrosome matrix required for the localization of PLK1 and NIN to the centrosomes. Required for the formation and/or maintenance of normal CETN1 assembly. The sequence is that of Outer dense fiber protein 2 (Odf2) from Rattus norvegicus (Rat).